We begin with the raw amino-acid sequence, 354 residues long: Guanine nucleotide-binding protein G(t) subunit alpha-3 (354 aa).

Positions 1 to 27 (MGSGISSESKESAKRSKELEKKLQEDA) are disordered. The N-myristoyl glycine moiety is linked to residue G2. Basic and acidic residues predominate over residues 8–27 (ESKESAKRSKELEKKLQEDA). The region spanning 32 to 354 (RTVKLLLLGA…KENLKDCGLF (323 aa)) is the G-alpha domain. The G1 motif stretch occupies residues 35–48 (KLLLLGAGESGKST). GTP contacts are provided by residues 40 to 47 (GAGESGKS), 175 to 181 (LHSRVKT), 200 to 204 (DVGGQ), 269 to 272 (NKKD), and A326. Positions 47 and 181 each coordinate Mg(2+). The G2 motif stretch occupies residues 173–181 (DVLHSRVKT). Positions 196-205 (FRMFDVGGQR) are G3 motif. The tract at residues 265–272 (VLFLNKKD) is G4 motif. The interval 324-329 (TCATDT) is G5 motif.

This sequence belongs to the G-alpha family. G(i/o/t/z) subfamily. As to quaternary structure, g proteins are composed of 3 units; alpha, beta and gamma, respectively GNAT3, GNB1 and GNG13 for Gustducin heterotrimer for bitter taste transduction. The alpha chain contains the guanine nucleotide binding site. Component of the TAS2R14-GNAT3 complex, consisting of TAS2R14, GNAT3, GNB1 and GNG2; within the complex interacts with TAS2R14; this complex plays a role in the perception of bitterness. Gustducin heterotrimer may also be composed of GNAT3, GNB3 and GNG13. Potential N-myristoylation may anchor alpha-subunit to the inner surface of plasma membrane. Expressed in taste buds (sensory organs of clustered epithelial cells) of the circumvallate and foliate papillae of the tongue at protein level. Expressed in enteroendocrine L cells of the gut. Detected also in spermatozoa.

The protein localises to the cytoplasm. In terms of biological role, guanine nucleotide-binding protein (G protein) alpha subunit playing a prominent role in bitter and sweet taste transduction as well as in umami (monosodium glutamate, monopotassium glutamate, and inosine monophosphate) taste transduction. Transduction by this alpha subunit involves coupling of specific cell-surface receptors with a cGMP-phosphodiesterase; Activation of phosphodiesterase lowers intracellular levels of cAMP and cGMP which may open a cyclic nucleotide-suppressible cation channel leading to influx of calcium, ultimately leading to release of neurotransmitter. Indeed, denatonium and strychnine induce transient reduction in cAMP and cGMP in taste tissue, whereas this decrease is inhibited by GNAT3 antibody. Gustducin heterotrimer transduces response to bitter and sweet compounds via regulation of phosphodiesterase for alpha subunit, as well as via activation of phospholipase C for beta and gamma subunits, with ultimate increase inositol trisphosphate and increase of intracellular Calcium. GNAT3 can functionally couple to taste receptors to transmit intracellular signal: receptor heterodimer TAS1R2/TAS1R3 senses sweetness and TAS1R1/TAS1R3 transduces umami taste, whereas the T2R family GPCRs such as TAS2R14 act as bitter sensors. Also functions as lumenal sugar sensors in the gut to control the expression of the Na+-glucose transporter SGLT1 in response to dietaty sugar, as well as the secretion of Glucagon-like peptide-1, GLP-1 and glucose-dependent insulinotropic polypeptide, GIP. Thus, may modulate the gut capacity to absorb sugars, with implications in malabsorption syndromes and diet-related disorders including diabetes and obesity. This chain is Guanine nucleotide-binding protein G(t) subunit alpha-3 (GNAT3), found in Homo sapiens (Human).